A 369-amino-acid chain; its full sequence is MARQQTKKNYSLRKLKTGTASVAVALTVLGAGFANQTEVRAEGVNATTSLTEKAKYDALKDENTGLRGDQTKLVKKLEEEQEKSKNLEKEKQKLENQALNFQDVIETQEKEKEDLKTTLAKATKENEISEASRKGLSRDLEASRAAKKELEAKHQKLEAENKKLTEANQVSEASRKGLSNDLEASRAAKKELEAKYQKLETDHQALEAKHQKLEADLPKFQRPSRKGLSRDLEASREANKKVTSELTQAKAQLSALEESKKLSEKEKAELQAKLDAQGKALKEQLAKQTEELAKLRAEKAAGSKTPATKPANKERSGRAAQTATRPSQNKGMRSQLPSTGEAANPFFTAAAATVMVSAGMLALKRKEEN.

The first 41 residues, 1 to 41 (MARQQTKKNYSLRKLKTGTASVAVALTVLGAGFANQTEVRA), serve as a signal peptide directing secretion. C repeat units follow at residues 120–154 (AKAT…EAKH), 162–196 (KKLT…EAKY), and 211–246 (QKLE…TSEL). 4 stretches are compositionally biased toward basic and acidic residues: residues 125-165 (ENEI…KKLT), 202-219 (DHQA…DLPK), 228-243 (LSRD…KKVT), and 257-271 (EESK…AELQ). Disordered regions lie at residues 125 to 189 (ENEI…RAAK) and 202 to 271 (DHQA…AELQ). The tract at residues 129-200 (SEASRKGLSR…ELEAKYQKLE (72 aa)) is 2 X repeats, type A. The tract at residues 132–241 (SRKGLSRDLE…LEASREANKK (110 aa)) is 3 X repeats, type B. D repeat units follow at residues 272–277 (AKLDAQ), 278–283 (GKALKE), 286–291 (AKQTEE), and 293–298 (AKLRAE). The span at 292–301 (LAKLRAEKAA) shows a compositional bias: basic and acidic residues. The disordered stretch occupies residues 292 to 341 (LAKLRAEKAAGSKTPATKPANKERSGRAAQTATRPSQNKGMRSQLPSTGE). Residues 319-338 (AAQTATRPSQNKGMRSQLPS) show a composition bias toward polar residues. Positions 336-340 (LPSTG) match the LPXTG sorting signal motif. At Thr339 the chain carries Pentaglycyl murein peptidoglycan amidated threonine. The propeptide at 340–369 (GEAANPFFTAAAATVMVSAGMLALKRKEEN) is removed by sortase.

Belongs to the M protein family.

It is found in the secreted. The protein resides in the cell wall. This chain is Virulence factor-related M protein (ennX), found in Streptococcus pyogenes serotype M49.